The sequence spans 1019 residues: Photoactivated adenylate cyclase subunit alpha (1019 aa).

A BLUF 1 domain is found at leucine 55 to lysine 148. In terms of domain architecture, Guanylate cyclase 1 spans valine 204 to threonine 332. The 93-residue stretch at leucine 467–threonine 559 folds into the BLUF 2 domain. A Guanylate cyclase 2 domain is found at valine 615 to glutamate 744. The interval glycine 822–leucine 861 is disordered. Residues alanine 825–proline 839 are compositionally biased toward low complexity. Over residues arginine 846–proline 855 the composition is skewed to polar residues.

This sequence belongs to the adenylyl cyclase class-4/guanylyl cyclase family. In terms of assembly, heterotetramer of two alpha and two beta subunits. Requires FAD as cofactor.

Its subcellular location is the cell projection. The protein resides in the cilium. The protein localises to the flagellum. It carries out the reaction ATP = 3',5'-cyclic AMP + diphosphate. Its activity is regulated as follows. Activity increased by up to 80-fold under blue light. Acts as a blue light photoreceptor for the step-up photophobic response. Mediates photoavoidance. The polypeptide is Photoactivated adenylate cyclase subunit alpha (Euglena gracilis).